Here is a 342-residue protein sequence, read N- to C-terminus: N-acetyl-gamma-glutamyl-phosphate reductase (342 aa).

Cysteine 149 is a catalytic residue.

This sequence belongs to the NAGSA dehydrogenase family. Type 1 subfamily.

The protein resides in the cytoplasm. It carries out the reaction N-acetyl-L-glutamate 5-semialdehyde + phosphate + NADP(+) = N-acetyl-L-glutamyl 5-phosphate + NADPH + H(+). It functions in the pathway amino-acid biosynthesis; L-arginine biosynthesis; N(2)-acetyl-L-ornithine from L-glutamate: step 3/4. Its function is as follows. Catalyzes the NADPH-dependent reduction of N-acetyl-5-glutamyl phosphate to yield N-acetyl-L-glutamate 5-semialdehyde. This Ruegeria pomeroyi (strain ATCC 700808 / DSM 15171 / DSS-3) (Silicibacter pomeroyi) protein is N-acetyl-gamma-glutamyl-phosphate reductase.